The chain runs to 421 residues: Glucose-1-phosphate adenylyltransferase (421 aa).

Residues Tyr-108, Gly-173, 188 to 189 (EK), and Ser-206 each bind alpha-D-glucose 1-phosphate.

Belongs to the bacterial/plant glucose-1-phosphate adenylyltransferase family. As to quaternary structure, homotetramer.

It catalyses the reaction alpha-D-glucose 1-phosphate + ATP + H(+) = ADP-alpha-D-glucose + diphosphate. The protein operates within glycan biosynthesis; glycogen biosynthesis. Functionally, involved in the biosynthesis of ADP-glucose, a building block required for the elongation reactions to produce glycogen. Catalyzes the reaction between ATP and alpha-D-glucose 1-phosphate (G1P) to produce pyrophosphate and ADP-Glc. The polypeptide is Glucose-1-phosphate adenylyltransferase (Mesorhizobium japonicum (strain LMG 29417 / CECT 9101 / MAFF 303099) (Mesorhizobium loti (strain MAFF 303099))).